The primary structure comprises 265 residues: tRNA (guanine-N(1)-)-methyltransferase (265 aa).

S-adenosyl-L-methionine-binding positions include G119 and V139–L144.

This sequence belongs to the RNA methyltransferase TrmD family. As to quaternary structure, homodimer.

Its subcellular location is the cytoplasm. It catalyses the reaction guanosine(37) in tRNA + S-adenosyl-L-methionine = N(1)-methylguanosine(37) in tRNA + S-adenosyl-L-homocysteine + H(+). Its function is as follows. Specifically methylates guanosine-37 in various tRNAs. This is tRNA (guanine-N(1)-)-methyltransferase from Pseudoalteromonas atlantica (strain T6c / ATCC BAA-1087).